Reading from the N-terminus, the 345-residue chain is Protein GAMETE CELL DEFECTIVE 1, mitochondrial (345 aa).

A mitochondrion-targeting transit peptide spans 1–43 (MLALRKTLLHGRLPAAPPAAAAAAIASRIPALLRRLSSSPGDG). The disordered stretch occupies residues 36–82 (LSSSPGDGQGGDEWGSSWSTGITKEHFDGSDAAVGRPVTSPSKPVSP).

It localises to the mitochondrion. Functionally, essential for fertility (male and female gametophyte functions and development). Required for the integrity of female gametic mitochondria. Involved in embryo apical-basal patterning, and particularly dorsal-ventral patterning, during early embryogenesis, and endosperm free nucleus positioning and development as well as early endosperm development, probably by modulating the expression pattern of related genes (e.g. AL1, MYB3/AL2, CYP78A13/GE, PNH1, HAZ1, MPK6 and OSH1). Has function in triggering of endosperm programmed cell death (PCD) leading to syncytial endosperm cellularization and starchy endosperm cell maturation. Implicated in central vacuole dynamics necessary for microspore development leading to pollen production, and for pollen development and germination. In Oryza sativa subsp. indica (Rice), this protein is Protein GAMETE CELL DEFECTIVE 1, mitochondrial.